The chain runs to 4146 residues: DNA-dependent protein kinase catalytic subunit (4146 aa).

HEAT repeat units lie at residues D308–I343, V925–M962, Q1026–S1062, and P1075–F1111. 2 TPR repeats span residues P1745–P1778 and V1974–Y2007. S2075 carries the phosphoserine; by autocatalysis modification. T2631 is subject to Phosphothreonine; by autocatalysis. S2634 is subject to Phosphoserine; by autocatalysis. Phosphothreonine; by autocatalysis occurs at positions 2659 and 2668. Residues F2873–S3556 form the FAT domain. The PI3K/PI4K catalytic domain occupies F3739–G4071. Positions V3745–K3751 are G-loop. The tract at residues G3937–N3945 is catalytic loop. Residues G3957–T3982 form an activation loop region. The region spanning D4114–I4146 is the FATC domain.

Belongs to the PI3/PI4-kinase family. DNA-PK is a heterotrimer of prkdc and the Ku dimer (composed of xrcc6/Ku70 and xrcc5/Ku86). Component of the core long-range non-homologous end joining (NHEJ) complex (also named DNA-PK complex) composed of prkdc, lig4, xrcc4, xrcc6/ku70, xrcc5/ku86 and nhej1/xlf. Additional component of the NHEJ complex includes paxx. Following autophosphorylation, prkdc dissociates from DNA. In terms of processing, autophosphorylated at two clusters, the T2609 cluster and the S2056 cluster. Autophosphorylated on Ser-2075, Thr-2631, Thr-2659 and Thr-2668. Ser-2075 and Thr-2668 are DNA damage-inducible phosphorylation sites (inducible with ionizing radiation, IR) dephosphorylated by PPP5C. Autophosphorylation induces a conformational change that leads to remodeling of the DNA-PK complex, requisite for efficient end processing and DNA repair. Autophosphorylation in trans within DNA-PK complexes loaded on DNA ends leads to the dissociation of PRKDC from DNA and the transition into the short-range NHEJ complex. Autophosphorylation of the T2609 cluster is required for hematopoietic development and protein synthesis in erythrocytes precursors.

The protein localises to the nucleus. It localises to the nucleolus. The enzyme catalyses L-seryl-[protein] + ATP = O-phospho-L-seryl-[protein] + ADP + H(+). It carries out the reaction L-threonyl-[protein] + ATP = O-phospho-L-threonyl-[protein] + ADP + H(+). Its function is as follows. Serine/threonine-protein kinase that acts as a molecular sensor for DNA damage. Involved in DNA nonhomologous end joining (NHEJ) required for double-strand break (DSB) repair and V(D)J recombination. Must be bound to DNA to express its catalytic properties. Promotes processing of hairpin DNA structures in V(D)J recombination by activation of the hairpin endonuclease artemis (DCLRE1C). Recruited by XRCC5 and XRCC6 to DNA ends and is required to (1) protect and align broken ends of DNA, thereby preventing their degradation, (2) and sequester the DSB for repair by NHEJ. Acts as a scaffold protein to aid the localization of DNA repair proteins to the site of damage. The assembly of the DNA-PK complex at DNA ends is also required for the NHEJ ligation step. Found at the ends of chromosomes, suggesting a further role in the maintenance of telomeric stability and the prevention of chromosomal end fusion. As part of the DNA-PK complex, involved in the early steps of ribosome assembly by promoting the processing of precursor rRNA into mature 18S rRNA in the small-subunit processome. Recognizes the substrate consensus sequence [ST]-Q. Phosphorylates 'Ser-139' of histone variant H2AX, thereby regulating DNA damage response mechanism. This chain is DNA-dependent protein kinase catalytic subunit (prkdc), found in Xenopus laevis (African clawed frog).